The sequence spans 1367 residues: MAP3K epsilon protein kinase 2 (1367 aa).

A Protein kinase domain is found at 20-274 (YMLGDEIGKG…AKTLLSHPWI (255 aa)). HEAT repeat units follow at residues 25–62 (EIGK…EDLN) and 86–125 (LKTK…TVYI). ATP-binding positions include 26 to 34 (IGKGAYGRV) and Lys49. Asp144 (proton acceptor) is an active-site residue. Residues 218-256 (PYYDLQPMPALYRIVQDDTPPIPDSLSPDITDFLRLCFK) form an HEAT 3 repeat. Disordered stretches follow at residues 285 to 422 (LRHS…GRRN) and 437 to 513 (SSHS…VADG). Residues 293-306 (YMKETDSSSEKDAE) are compositionally biased toward basic and acidic residues. The span at 351 to 363 (LGEEGTDSEDDIN) shows a compositional bias: acidic residues. Residues 378 to 396 (RQSGTCSISSDAKGTSQDV) are compositionally biased toward polar residues. 2 stretches are compositionally biased toward basic and acidic residues: residues 397–408 (LENHEKYDRDEI) and 475–491 (SLHD…EGKT). The segment covering 492–507 (NEASTSTPTANVNQGD) has biased composition (polar residues). 5 HEAT repeats span residues 538–576 (SQDG…LFPL), 577–614 (QAVE…RPGQ), 633–658 (IPKS…DFLE), 659–700 (NACL…SSPL), and 704–742 (MFIS…VFKL). The interval 792–860 (PRARSGQLDP…LHPDGDRPRL (69 aa)) is disordered. Composition is skewed to polar residues over residues 799-814 (LDPN…TSPS) and 835-845 (ALTSNSQSSDV). Over residues 846-859 (HQPDALHPDGDRPR) the composition is skewed to basic and acidic residues. 10 HEAT repeats span residues 850–888 (ALHP…STDK), 906–943 (DQVR…HESR), 1045–1066 (DYLE…TVKS), 1067–1105 (YMCS…DPNC), 1112–1150 (ADAI…INKR), 1154–1191 (QAAE…ASRN), 1196–1236 (LRAH…KVEQ), 1257–1280 (RHFV…NKTL), 1281–1317 (ALNG…KHPK), and 1347–1367 (QVLV…NTIL).

Belongs to the protein kinase superfamily. Ser/Thr protein kinase family. In terms of processing, autophosphorylated. Expressed in both the sporophytic and the gametophytic tissues, especially in dividing cells. Mostly present in flower buds and mature flowers. Also accumulates in embryos and in roots.

It localises to the cytoplasm. Its subcellular location is the cytoskeleton. The protein localises to the microtubule organizing center. It is found in the nucleus. The protein resides in the nucleolus. It localises to the cell membrane. The enzyme catalyses L-seryl-[protein] + ATP = O-phospho-L-seryl-[protein] + ADP + H(+). The catalysed reaction is L-threonyl-[protein] + ATP = O-phospho-L-threonyl-[protein] + ADP + H(+). In terms of biological role, serine/threonine-protein kinase involved in the spatial and temporal control system organizing cortical activities in mitotic and postmitotic cells. Required for the normal functioning of the plasma membrane in developing pollen. Involved in the regulation of cell expansion and embryo development. The chain is MAP3K epsilon protein kinase 2 from Arabidopsis thaliana (Mouse-ear cress).